Consider the following 218-residue polypeptide: uncharacterized protein (218 aa).

This is an uncharacterized protein from Mycoplasma pneumoniae (strain ATCC 29342 / M129 / Subtype 1) (Mycoplasmoides pneumoniae).